The sequence spans 572 residues: Methionine--tRNA ligase (572 aa).

Residues 11-21 (PYINGIKHLGN) carry the 'HIGH' region motif. Zn(2+)-binding residues include C143, C146, C156, and C159. The short motif at 346–350 (QFSTS) is the 'KMSKS' region element. An ATP-binding site is contributed by T349.

It belongs to the class-I aminoacyl-tRNA synthetase family. MetG type 1 subfamily. In terms of assembly, monomer. It depends on Zn(2+) as a cofactor.

The protein localises to the cytoplasm. The enzyme catalyses tRNA(Met) + L-methionine + ATP = L-methionyl-tRNA(Met) + AMP + diphosphate. Functionally, is required not only for elongation of protein synthesis but also for the initiation of all mRNA translation through initiator tRNA(fMet) aminoacylation. In Cereibacter sphaeroides (strain ATCC 17025 / ATH 2.4.3) (Rhodobacter sphaeroides), this protein is Methionine--tRNA ligase.